Here is a 96-residue protein sequence, read N- to C-terminus: uncharacterized protein (96 aa).

2 consecutive transmembrane segments (helical) span residues 27–47 (LAFR…ALLI) and 50–70 (LSGV…SIVF).

The protein localises to the cell membrane. This is an uncharacterized protein from Haemophilus influenzae (strain ATCC 51907 / DSM 11121 / KW20 / Rd).